The chain runs to 253 residues: 2,3-bisphosphoglycerate-dependent phosphoglycerate mutase (253 aa).

Substrate-binding positions include 12–19 (RHGESEWN), 25–26 (TG), arginine 64, 91–94 (ERHY), lysine 102, and 118–119 (RR). The Tele-phosphohistidine intermediate role is filled by histidine 13. Glutamate 91 functions as the Proton donor/acceptor in the catalytic mechanism. Residues 126–148 (PPLADGSEFSQSDDPRYASIPPE) are disordered. Residue 187 to 188 (GN) participates in substrate binding.

The protein belongs to the phosphoglycerate mutase family. BPG-dependent PGAM subfamily.

The catalysed reaction is (2R)-2-phosphoglycerate = (2R)-3-phosphoglycerate. Its pathway is carbohydrate degradation; glycolysis; pyruvate from D-glyceraldehyde 3-phosphate: step 3/5. Its function is as follows. Catalyzes the interconversion of 2-phosphoglycerate and 3-phosphoglycerate. This chain is 2,3-bisphosphoglycerate-dependent phosphoglycerate mutase, found in Streptomyces avermitilis (strain ATCC 31267 / DSM 46492 / JCM 5070 / NBRC 14893 / NCIMB 12804 / NRRL 8165 / MA-4680).